The following is a 254-amino-acid chain: MATVDLRDNLLGISWVDSGWVPILNPSNVLEYFSERSNPFYDRTCNNEVVKMQRSTLDHLTQLVGVEYILLHTQEPILYIIRKQQRQSPTQVIPLADYYIIAGVVYQAPDLGSVISSRALSAVHGIQSAFDEAMSFCRYHPSKGYWWHFKDQEEKERVKPKSKRKEEPSSLFQRQRVDTLLLDLRNKFPPTFYQTKPGEKPVPVEVKKEPEVPVETVKPQEERETKPPAPPAPPRPPPQTTPNKPPPEKRARVQ.

Residues 190–254 (PTFYQTKPGE…PPPEKRARVQ (65 aa)) form a disordered region. Over residues 227 to 245 (PPAPPAPPRPPPQTTPNKP) the composition is skewed to pro residues.

It belongs to the Mediator complex subunit 6 family. In terms of assembly, component of the Mediator complex.

It localises to the nucleus. Functionally, component of the Mediator complex, a coactivator involved in the regulated transcription of nearly all RNA polymerase II-dependent genes. Mediator functions as a bridge to convey information from gene-specific regulatory proteins to the basal RNA polymerase II transcription machinery. Mediator is recruited to promoters by direct interactions with regulatory proteins and serves as a scaffold for the assembly of a functional preinitiation complex with RNA polymerase II and the general transcription factors. This chain is Mediator of RNA polymerase II transcription subunit 6 (med6), found in Danio rerio (Zebrafish).